Reading from the N-terminus, the 430-residue chain is Enolase (430 aa).

Gln167 is a binding site for (2R)-2-phosphoglycerate. The active-site Proton donor is the Glu209. The Mg(2+) site is built by Asp246, Glu287, and Asp314. (2R)-2-phosphoglycerate is bound by residues Lys339, Arg368, Ser369, and Lys390. The active-site Proton acceptor is the Lys339.

This sequence belongs to the enolase family. Mg(2+) is required as a cofactor.

The protein resides in the cytoplasm. The protein localises to the secreted. Its subcellular location is the cell surface. The catalysed reaction is (2R)-2-phosphoglycerate = phosphoenolpyruvate + H2O. It functions in the pathway carbohydrate degradation; glycolysis; pyruvate from D-glyceraldehyde 3-phosphate: step 4/5. Catalyzes the reversible conversion of 2-phosphoglycerate (2-PG) into phosphoenolpyruvate (PEP). It is essential for the degradation of carbohydrates via glycolysis. This is Enolase from Prochlorococcus marinus (strain MIT 9301).